The primary structure comprises 210 residues: Ribosomal RNA large subunit methyltransferase E (210 aa).

S-adenosyl-L-methionine is bound by residues glycine 61, tryptophan 63, aspartate 81, aspartate 97, and aspartate 122. Lysine 162 functions as the Proton acceptor in the catalytic mechanism. Over residues 187–196 (KPEASRKRSP) the composition is skewed to basic and acidic residues. A disordered region spans residues 187 to 210 (KPEASRKRSPEVYALGQGKRAHMK).

Belongs to the class I-like SAM-binding methyltransferase superfamily. RNA methyltransferase RlmE family.

It is found in the cytoplasm. The catalysed reaction is uridine(2552) in 23S rRNA + S-adenosyl-L-methionine = 2'-O-methyluridine(2552) in 23S rRNA + S-adenosyl-L-homocysteine + H(+). In terms of biological role, specifically methylates the uridine in position 2552 of 23S rRNA at the 2'-O position of the ribose in the fully assembled 50S ribosomal subunit. The sequence is that of Ribosomal RNA large subunit methyltransferase E from Stenotrophomonas maltophilia (strain K279a).